The chain runs to 508 residues: Drug efflux pump JefA (508 aa).

14 consecutive transmembrane segments (helical) span residues 9–29 (VLAT…VNVA), 46–66 (WAVA…ALLG), 75–95 (FVFG…PVSL), 104–124 (IQGL…SHSF), 136–156 (NWMA…GLMV), 163–183 (SVFL…LVGV), 194–214 (LDWV…YTII), 222–242 (QSAG…WLFV), 265–285 (SVLI…MVIT), 297–317 (LHAG…SLLA), 328–348 (LPVL…AISM), 354–374 (VALV…TPLL), 399–419 (LGGI…LGAA), and 479–499 (GIKL…VLGW).

Belongs to the major facilitator superfamily.

The protein resides in the cell inner membrane. In terms of biological role, involved in resistance to ethambutol and isoniazid. In Mycobacterium tuberculosis (strain CDC 1551 / Oshkosh), this protein is Drug efflux pump JefA.